The sequence spans 720 residues: Glycine--tRNA ligase beta subunit (720 aa).

The protein belongs to the class-II aminoacyl-tRNA synthetase family. As to quaternary structure, tetramer of two alpha and two beta subunits.

The protein resides in the cytoplasm. The catalysed reaction is tRNA(Gly) + glycine + ATP = glycyl-tRNA(Gly) + AMP + diphosphate. This chain is Glycine--tRNA ligase beta subunit, found in Dinoroseobacter shibae (strain DSM 16493 / NCIMB 14021 / DFL 12).